A 105-amino-acid chain; its full sequence is Small ribosomal subunit protein uS10 (105 aa).

This sequence belongs to the universal ribosomal protein uS10 family. Part of the 30S ribosomal subunit.

In terms of biological role, involved in the binding of tRNA to the ribosomes. The sequence is that of Small ribosomal subunit protein uS10 from Oleidesulfovibrio alaskensis (strain ATCC BAA-1058 / DSM 17464 / G20) (Desulfovibrio alaskensis).